The primary structure comprises 390 residues: Galactokinase (390 aa).

34-37 (EHTD) provides a ligand contact to substrate. Residues serine 68 and 122–128 (GSGLSSS) each bind ATP. Mg(2+) contacts are provided by serine 128 and glutamate 160. The Proton acceptor role is filled by aspartate 172. Tyrosine 221 serves as a coordination point for substrate.

It belongs to the GHMP kinase family. GalK subfamily.

It localises to the cytoplasm. The catalysed reaction is alpha-D-galactose + ATP = alpha-D-galactose 1-phosphate + ADP + H(+). It participates in carbohydrate metabolism; galactose metabolism. Its function is as follows. Catalyzes the transfer of the gamma-phosphate of ATP to D-galactose to form alpha-D-galactose-1-phosphate (Gal-1-P). The protein is Galactokinase of Chloroflexus aggregans (strain MD-66 / DSM 9485).